The primary structure comprises 273 residues: Dermonecrotic toxin LruSicTox-alphaIC1b (273 aa).

Residue H5 is part of the active site. Residues E25 and D27 each contribute to the Mg(2+) site. H41 (nucleophile) is an active-site residue. Cystine bridges form between C45–C51 and C47–C190. Mg(2+) is bound at residue D85.

This sequence belongs to the arthropod phospholipase D family. Class II subfamily. Mg(2+) serves as cofactor. As to expression, expressed by the venom gland.

The protein resides in the secreted. It carries out the reaction an N-(acyl)-sphingosylphosphocholine = an N-(acyl)-sphingosyl-1,3-cyclic phosphate + choline. The enzyme catalyses an N-(acyl)-sphingosylphosphoethanolamine = an N-(acyl)-sphingosyl-1,3-cyclic phosphate + ethanolamine. The catalysed reaction is a 1-acyl-sn-glycero-3-phosphocholine = a 1-acyl-sn-glycero-2,3-cyclic phosphate + choline. It catalyses the reaction a 1-acyl-sn-glycero-3-phosphoethanolamine = a 1-acyl-sn-glycero-2,3-cyclic phosphate + ethanolamine. Its function is as follows. Dermonecrotic toxins cleave the phosphodiester linkage between the phosphate and headgroup of certain phospholipids (sphingolipid and lysolipid substrates), forming an alcohol (often choline) and a cyclic phosphate. This toxin acts on sphingomyelin (SM). It may also act on ceramide phosphoethanolamine (CPE), lysophosphatidylcholine (LPC) and lysophosphatidylethanolamine (LPE), but not on lysophosphatidylserine (LPS), and lysophosphatidylglycerol (LPG). It acts by transphosphatidylation, releasing exclusively cyclic phosphate products as second products. Induces dermonecrosis, hemolysis, increased vascular permeability, edema, inflammatory response, and platelet aggregation. This chain is Dermonecrotic toxin LruSicTox-alphaIC1b, found in Loxosceles rufescens (Mediterranean recluse spider).